Reading from the N-terminus, the 1337-residue chain is C-Jun-amino-terminal kinase-interacting protein 3 (1337 aa).

The RH1 domain maps to 12–100; that stretch reads VVVYQDDYCS…LTQYEREKAL (89 aa). The kinesin-binding domain (KBD); essential for its function in axon elongation stretch occupies residues 50–80; that stretch reads EVVKELMPLVVNVLENLDSVLSENQEHEVEL. Residues 58–177 are a coiled coil; sequence LVVNVLENLD…HTEMIQTYVE (120 aa). Disordered regions lie at residues 183-211 and 245-285; these read KMQQ…SLNV and SSSY…PSAA. Polar residues predominate over residues 184–198; sequence MQQVGGSGQTESSLP. Positions 210–226 are JNK-binding domain (JBD); essential for its function in axon elongation; it reads NVFPLADGMVRAQMGGK. Residues 261–270 are compositionally biased toward low complexity; it reads SSAAATPSTT. Phosphothreonine; by MAPK occurs at positions 266, 276, and 287. The segment covering 271 to 282 has biased composition (polar residues); sequence GTKSNTPTSSVP. Phosphoserine; by ROCK1 occurs at positions 315 and 365. Residue serine 366 is modified to Phosphoserine. The leucine zipper-like domain (LZ); essential for its function in axon elongation stretch occupies residues 424–459; the sequence is LLLENSQLLETKNALNVVKNDLIAKVDQLSGEQEVL. Residues 437-555 are a coiled coil; it reads ALNVVKNDLI…LQEAVRWTEM (119 aa). Positions 459-515 are interaction with NTRK2; the sequence is LKGELEAAKQAKVKLENRIKELEEELKRVKSEAVTARREPREEVEDVSSYLCTELDK. One can recognise an RH2 domain in the interval 521-595; that stretch reads RRRFTRVEMA…SPPPAKRSYP (75 aa). The residue at position 603 (serine 603) is a Phosphoserine. The tract at residues 633 to 655 is disordered; the sequence is DDCTSSARREQKREQYRQVREHV. Over residues 639–655 the composition is skewed to basic and acidic residues; the sequence is ARREQKREQYRQVREHV. Serine 677 is subject to Phosphoserine. 2 disordered regions span residues 719-772 and 859-966; these read WKPH…ATSS and PRSN…TTTS. Basic and acidic residues predominate over residues 739 to 765; sequence LTCDREGEGEPKSTHPSPEKKKAKETP. Composition is skewed to polar residues over residues 879-892 and 941-952; these read VATT…PSQS and ENGSESNGTIVQ.

It belongs to the JIP scaffold family. Forms homo- or heterooligomeric complexes. The central region of MAPK8IP3 interacts with the C-terminal of MAPK8IP2 but not MAPK8IP1. Binds specific components of the JNK signaling pathway namely MAPK8/JNK1, MAPK9/JNK2 and MAPK10/JNK3 to the N-terminal region, MAP2K4/MKK4 and MAP2K7/MKK7 to the central region and MAP3K11 to the C-terminal region. Binds the TPR motif-containing C-terminal of kinesin light chain, KLC1. Pre-assembled MAPK8IP1 scaffolding complexes are then transported as a cargo of kinesin, to the required subcellular location. Interacts with ROCK1 and this interaction is enhanced by ultraviolet-B (UVB) radiation. Interacts with SH3RF2. Interacts with NTRK2/TRKB and NTRK3/TRKC. Post-translationally, phosphorylation by ROCK1 is crucial for the recruitment of JNK. Highly expressed throughout many regions of the brain and at lower levels in the heart, liver, lung, testes and kidney. All isoforms have been identified in the brain, isoform 1a is also expressed in the spleen and lung.

Its subcellular location is the cytoplasm. The protein resides in the golgi apparatus. The protein localises to the cytoplasmic vesicle. It localises to the cell projection. It is found in the growth cone. Its subcellular location is the axon. The protein resides in the dendrite. The protein localises to the perinuclear region. Its function is as follows. The JNK-interacting protein (JIP) group of scaffold proteins selectively mediates JNK signaling by aggregating specific components of the MAPK cascade to form a functional JNK signaling module. May function as a regulator of vesicle transport, through interactions with the JNK-signaling components and motor proteins. Promotes neuronal axon elongation in a kinesin- and JNK-dependent manner. Activates cofilin at axon tips via local activation of JNK, thereby regulating filopodial dynamics and enhancing axon elongation. Its binding to kinesin heavy chains (KHC), promotes kinesin-1 motility along microtubules and is essential for axon elongation and regeneration. Regulates cortical neuronal migration by mediating NTRK2/TRKB anterograde axonal transport during brain development. Acts as an adapter that bridges the interaction between NTRK2/TRKB and KLC1 and drives NTRK2/TRKB axonal but not dendritic anterograde transport, which is essential for subsequent BDNF-triggered signaling and filopodia formation. The polypeptide is C-Jun-amino-terminal kinase-interacting protein 3 (Mapk8ip3) (Mus musculus (Mouse)).